Reading from the N-terminus, the 123-residue chain is Snaclec echicetin subunit beta (123 aa).

The C-type lectin domain occupies Asn1–Cys121. 3 disulfides stabilise this stretch: Cys2/Cys13, Cys30/Cys119, and Cys96/Cys111.

The protein belongs to the snaclec family. In terms of assembly, heterodimer of subunits alpha and beta; disulfide-linked. Forms an active complex with the pentameric immunoglobuline Mkappa (IgMkappa). As to expression, expressed by the venom gland.

It is found in the secreted. Echicetin itself inhibits aggregation of washed platelets induced by vWF, thrombin or alboaggregin-A. However, when complexed with the pentameric plasma immunoglobulin Mkappa (IgMkappa), echicetin binds specifically to GPIb and activates platelets. This is caused by P-selectin expression and activation of alpha-IIb/beta-3 as well as tyrosine phosphorylation of several signal transduction molecules, including p53/56(LYN), p64, p72(SYK), p70 to p90, and p120. In vivo, it induces thrombocytopenia when injected into mice, probably accounting of activation of platelets rather than inhibition. This Echis carinatus sochureki (Saw-scaled viper) protein is Snaclec echicetin subunit beta.